The sequence spans 611 residues: tRNA uridine 5-carboxymethylaminomethyl modification enzyme MnmG (611 aa).

An FAD-binding site is contributed by G14–G19. G274–F288 provides a ligand contact to NAD(+).

This sequence belongs to the MnmG family. In terms of assembly, homodimer. Heterotetramer of two MnmE and two MnmG subunits. It depends on FAD as a cofactor.

Its subcellular location is the cytoplasm. Functionally, NAD-binding protein involved in the addition of a carboxymethylaminomethyl (cmnm) group at the wobble position (U34) of certain tRNAs, forming tRNA-cmnm(5)s(2)U34. This Chlamydia caviae (strain ATCC VR-813 / DSM 19441 / 03DC25 / GPIC) (Chlamydophila caviae) protein is tRNA uridine 5-carboxymethylaminomethyl modification enzyme MnmG.